Here is a 312-residue protein sequence, read N- to C-terminus: Methionyl-tRNA formyltransferase (312 aa).

109 to 112 (SLLP) contributes to the (6S)-5,6,7,8-tetrahydrofolate binding site.

It belongs to the Fmt family.

It carries out the reaction L-methionyl-tRNA(fMet) + (6R)-10-formyltetrahydrofolate = N-formyl-L-methionyl-tRNA(fMet) + (6S)-5,6,7,8-tetrahydrofolate + H(+). Its function is as follows. Attaches a formyl group to the free amino group of methionyl-tRNA(fMet). The formyl group appears to play a dual role in the initiator identity of N-formylmethionyl-tRNA by promoting its recognition by IF2 and preventing the misappropriation of this tRNA by the elongation apparatus. The sequence is that of Methionyl-tRNA formyltransferase from Caulobacter sp. (strain K31).